Reading from the N-terminus, the 91-residue chain is UPF0250 protein PputGB1_4855 (91 aa).

It belongs to the UPF0250 family.

The sequence is that of UPF0250 protein PputGB1_4855 from Pseudomonas putida (strain GB-1).